The primary structure comprises 38 residues: Cytochrome b6-f complex subunit 5 (38 aa).

A helical membrane pass occupies residues 5–25 (LLLGIVLGLIPITLAGLFVAA).

This sequence belongs to the PetG family. As to quaternary structure, the 4 large subunits of the cytochrome b6-f complex are cytochrome b6, subunit IV (17 kDa polypeptide, PetD), cytochrome f and the Rieske protein, while the 4 small subunits are PetG, PetL, PetM and PetN. The complex functions as a dimer.

It localises to the cellular thylakoid membrane. In terms of biological role, component of the cytochrome b6-f complex, which mediates electron transfer between photosystem II (PSII) and photosystem I (PSI), cyclic electron flow around PSI, and state transitions. PetG is required for either the stability or assembly of the cytochrome b6-f complex. The polypeptide is Cytochrome b6-f complex subunit 5 (Rippkaea orientalis (strain PCC 8801 / RF-1) (Cyanothece sp. (strain PCC 8801))).